The chain runs to 858 residues: Respiratory burst oxidase homolog protein D (858 aa).

Over residues 1–13 (MQNPEDHHSDREL) the composition is skewed to basic and acidic residues. Residues 1–27 (MQNPEDHHSDRELSSPSNTTKSNDDKN) are disordered. At 1–318 (MQNPEDHHSD…KYFLLDNWRR (318 aa)) the chain is on the cytoplasmic side. 2 EF-hand-like regions span residues 134–144 (TATSDSLLPRA) and 171–182 (RNITSGCISKEQ). 2 consecutive EF-hand domains span residues 194-229 (SFDSRLRTFFDMVDKDADGRLTEEEVREIICLSASA) and 238-273 (QAAEYAALIMEELDRDQKGYIMLENLEMLLLEAPIQ). Ca(2+)-binding residues include Asp207, Asp209, Asp211, Arg213, and Glu218. The chain crosses the membrane as a helical span at residues 319–339 (VWVLLLWIGVMAGLFAYKYVQ). Topologically, residues 340 to 351 (YKNKAAFNVMGH) are extracellular. Residues 352 to 372 (CVCVAKGAAEVLKLNMALILL) form a helical membrane-spanning segment. The region spanning 357-514 (KGAAEVLKLN…LFVIVYSLLI (158 aa)) is the Ferric oxidoreductase domain. Over 373–397 (PVCRNTITWLRNKTKLGGAVPFDDN) the chain is Cytoplasmic. Residues 398–418 (INFHKVVAGAIAVGVGIHVLA) traverse the membrane as a helical segment. The Extracellular segment spans residues 419 to 454 (HMTCDFPRLLNASPEKYKPMEPYFGDQPRNYWHFVK). Residues 455-475 (GVEGVSGIIMVVLMSIAFTLA) form a helical membrane-spanning segment. The Cytoplasmic portion of the chain corresponds to 476–497 (SQRFRRNKIRLPRPLNKLTGFN). A helical transmembrane segment spans residues 498-518 (AFWYSHHLFVIVYSLLIVHGI). The Extracellular segment spans residues 519-675 (ELYLTKEWYK…APAQDYKEYE (157 aa)). The FAD-binding FR-type domain maps to 548–670 (LRAFRSSVKD…DGPYGAPAQD (123 aa)). Residues 676-696 (VLLLVGLGIGATPMISIVKDI) traverse the membrane as a helical segment. Topologically, residues 697 to 858 (VNNMKEEKYD…TKFDFHKENF (162 aa)) are cytoplasmic.

Belongs to the RBOH (TC 5.B.1.3) family. As to quaternary structure, monomer and homodimer. Phosphorylated by CPK. As to expression, expressed in leaves.

It is found in the membrane. Functionally, calcium-dependent NADPH oxidase that generates superoxide. May be responsible for the oxidative burst in response to pathogen attack in the leaves. The sequence is that of Respiratory burst oxidase homolog protein D (RBOHD) from Solanum tuberosum (Potato).